Reading from the N-terminus, the 518-residue chain is Putative ribose/galactose/methyl galactoside import ATP-binding protein (518 aa).

Residues 1–22 (MSIAVLDRPMSRQDTPSASSVP) form a disordered region. The span at 12-22 (RQDTPSASSVP) shows a compositional bias: polar residues. ABC transporter domains lie at 29–265 (LEVR…VGRE) and 275–515 (VPIG…VMEL). ATP is bound at residue 61–68 (GENGAGKS).

Belongs to the ABC transporter superfamily. Carbohydrate importer 2 (CUT2) (TC 3.A.1.2) family.

It is found in the cell inner membrane. The enzyme catalyses D-ribose(out) + ATP + H2O = D-ribose(in) + ADP + phosphate + H(+). It carries out the reaction D-galactose(out) + ATP + H2O = D-galactose(in) + ADP + phosphate + H(+). In terms of biological role, part of an ABC transporter complex involved in carbohydrate import. Could be involved in ribose, galactose and/or methyl galactoside import. Responsible for energy coupling to the transport system. The chain is Putative ribose/galactose/methyl galactoside import ATP-binding protein from Ralstonia nicotianae (strain ATCC BAA-1114 / GMI1000) (Ralstonia solanacearum).